We begin with the raw amino-acid sequence, 494 residues long: Glycerol kinase (494 aa).

Thr-13 serves as a coordination point for ADP. Thr-13, Thr-14, and Ser-15 together coordinate ATP. Thr-13 contacts sn-glycerol 3-phosphate. Residue Arg-17 coordinates ADP. Residues Arg-83, Glu-84, Tyr-135, and Asp-244 each contribute to the sn-glycerol 3-phosphate site. Positions 83, 84, 135, 244, and 245 each coordinate glycerol. Residues Thr-266 and Gly-309 each contribute to the ADP site. The ATP site is built by Thr-266, Gly-309, Gln-313, and Gly-410. ADP contacts are provided by Gly-410 and Asn-414.

Belongs to the FGGY kinase family.

The catalysed reaction is glycerol + ATP = sn-glycerol 3-phosphate + ADP + H(+). It participates in polyol metabolism; glycerol degradation via glycerol kinase pathway; sn-glycerol 3-phosphate from glycerol: step 1/1. Inhibited by fructose 1,6-bisphosphate (FBP). Its function is as follows. Key enzyme in the regulation of glycerol uptake and metabolism. Catalyzes the phosphorylation of glycerol to yield sn-glycerol 3-phosphate. In Shewanella baltica (strain OS223), this protein is Glycerol kinase.